Reading from the N-terminus, the 496-residue chain is Cytochrome P450 71D95 (496 aa).

Residues Glu-2–Ile-22 traverse the membrane as a helical; Signal-anchor segment. Position 436 (Cys-436) interacts with heme.

This sequence belongs to the cytochrome P450 family. Heme is required as a cofactor.

It is found in the endoplasmic reticulum membrane. It carries out the reaction (4S)-limonene + reduced [NADPH--hemoprotein reductase] + O2 = (1S,6R)-isopiperitenol + oxidized [NADPH--hemoprotein reductase] + H2O + H(+). Hydroxylates both (+)- and (-)-limonene to (+) and (-)-trans-isopiperitenol. This is Cytochrome P450 71D95 (CYP71D95) from Mentha spicata (Spearmint).